A 310-amino-acid chain; its full sequence is Olfactory receptor 7A42 (310 aa).

The Extracellular segment spans residues 1-25 (MESGNSTRRIPSFFLLGFSENPHLQ). N5 carries an N-linked (GlcNAc...) asparagine glycan. The chain crosses the membrane as a helical span at residues 26 to 46 (FLIFVLFLSMYLVTVLGNLLI). Residues 47–67 (IMVIITQSPLHTPMYFFLANL) are Cytoplasmic-facing. A helical transmembrane segment spans residues 68–88 (SFVDICFTSTTVPKMLVNIQT). Topologically, residues 89–100 (QSKAITYADCIS) are extracellular. A disulfide bridge links C98 with C190. A helical membrane pass occupies residues 101 to 121 (QMSVFLVFAELDNFLLAVMAY). Residues 122–135 (DRYVAICHPLYYTF) lie on the Cytoplasmic side of the membrane. The helical transmembrane segment at 136-156 (IVNQHLCILMVLLSWVVSILH) threads the bilayer. The Extracellular segment spans residues 157–202 (AFLQSSIVLQLTFCGDVKIPHFFCELNQLSQLTCLDSLSSHLIMNL). The helical transmembrane segment at 203–223 (VPVLLAVISFSSILYSYFKIV) threads the bilayer. Over 224–240 (SSICSISSVQGKYTAFS) the chain is Cytoplasmic. The helical transmembrane segment at 241-261 (TCVSHLSIVFLFYSTGLGVYV) threads the bilayer. Residues 262-272 (SSAVVQSSHSA) are Extracellular-facing. The helical transmembrane segment at 273-293 (ARASVMYTVVTPMLNPFIYSL) threads the bilayer. Topologically, residues 294-310 (RNKDVKKALERLLEGKL) are cytoplasmic.

Belongs to the G-protein coupled receptor 1 family.

The protein resides in the cell membrane. Odorant receptor. The chain is Olfactory receptor 7A42 from Mus musculus (Mouse).